A 613-amino-acid chain; its full sequence is RNA polymerase-associated protein RTF1 homolog (613 aa).

Disordered stretches follow at residues 1–90 (MSSS…DKAR) and 121–247 (QQLA…KDKI). Basic residues predominate over residues 55–68 (PAKKKTLTKRKRRA). Residues 72 to 81 (SDDDQVDDDL) are compositionally biased toward acidic residues. The segment covering 167–176 (AAFHRPSDIN) has biased composition (basic and acidic residues). Residues 175 to 209 (INRKHKEKNAMDALKNKRKEIEKKNAKNEALSIDA) are a coiled coil. Residues 215–235 (SGSSSSSSSSESSRSSSSSRE) show a composition bias toward low complexity. Residues 236–247 (SSPERVSEKDKI) show a composition bias toward basic and acidic residues. Residues 252-383 (VDGLSELRRA…KKQDIEKAIN (132 aa)) form the Plus3 domain. Positions 425 to 462 (RGDIREAEQIQTKIDEIERQADELEKERSKSISAIAFI) form a coiled coil. Disordered stretches follow at residues 485–549 (SQDD…KTDI) and 564–613 (LKDF…SSAV). Residues 510–521 (TLSASSSTTNLS) are compositionally biased toward low complexity. Over residues 569-586 (TPESSGNKRPSISSSKGV) the composition is skewed to polar residues. A compositionally biased stretch (low complexity) spans 602–613 (GSSTSAAPSSAV).

Component of the PAF1 complex which consists of at least cdc-73, ctr-9, leo-1, pafo-1 and rtfo-1.

The protein resides in the nucleus. Component of the PAF1 complex which is a multifunctional complex involved in transcription initiation via genetic interactions with TATA-binding proteins, elongation and transcription-coupled histone modification. The protein is RNA polymerase-associated protein RTF1 homolog of Caenorhabditis elegans.